We begin with the raw amino-acid sequence, 376 residues long: Chaperone protein DnaJ (376 aa).

In terms of domain architecture, J spans 5 to 70 (DYYEVLGVKK…QKRAAYDQYG (66 aa)). Residues 131–209 (GVTKEIRIPT…CHGHGRVEKS (79 aa)) form a CR-type zinc finger. The Zn(2+) site is built by Cys144, Cys147, Cys161, Cys164, Cys183, Cys186, Cys197, and Cys200. CXXCXGXG motif repeat units lie at residues 144–151 (CDVCHGSG), 161–168 (CSTCRGAG), 183–190 (CPTCHGSG), and 197–204 (CNKCHGHG).

This sequence belongs to the DnaJ family. In terms of assembly, homodimer. Zn(2+) is required as a cofactor.

The protein localises to the cytoplasm. Functionally, participates actively in the response to hyperosmotic and heat shock by preventing the aggregation of stress-denatured proteins and by disaggregating proteins, also in an autonomous, DnaK-independent fashion. Unfolded proteins bind initially to DnaJ; upon interaction with the DnaJ-bound protein, DnaK hydrolyzes its bound ATP, resulting in the formation of a stable complex. GrpE releases ADP from DnaK; ATP binding to DnaK triggers the release of the substrate protein, thus completing the reaction cycle. Several rounds of ATP-dependent interactions between DnaJ, DnaK and GrpE are required for fully efficient folding. Also involved, together with DnaK and GrpE, in the DNA replication of plasmids through activation of initiation proteins. This is Chaperone protein DnaJ from Yersinia enterocolitica serotype O:8 / biotype 1B (strain NCTC 13174 / 8081).